The chain runs to 25 residues: Nicotinic acetylcholine receptor-binding protein Mnn-4 (25 aa).

A disulfide bridge connects residues cysteine 3 and cysteine 20.

This sequence belongs to the three-finger toxin family. Short-chain subfamily. Expressed by the venom gland.

The protein resides in the secreted. Binds and may inhibit nicotinic acetylcholine receptors (nAChR). This chain is Nicotinic acetylcholine receptor-binding protein Mnn-4, found in Micrurus nigrocinctus (Central American coral snake).